Here is a 121-residue protein sequence, read N- to C-terminus: Protein GAT4 (121 aa).

Residues Glu-29–Gly-48 form a disordered region. The segment at Cys-53–Cys-79 adopts a GATA-type zinc-finger fold.

This is Protein GAT4 (GAT4) from Saccharomyces cerevisiae (strain ATCC 204508 / S288c) (Baker's yeast).